A 296-amino-acid chain; its full sequence is Putative S-adenosyl-L-methionine-dependent methyltransferase MAP_3881 (296 aa).

Residues Asp121 and 150–151 (DL) each bind S-adenosyl-L-methionine.

The protein belongs to the UPF0677 family.

Exhibits S-adenosyl-L-methionine-dependent methyltransferase activity. The protein is Putative S-adenosyl-L-methionine-dependent methyltransferase MAP_3881 of Mycolicibacterium paratuberculosis (strain ATCC BAA-968 / K-10) (Mycobacterium paratuberculosis).